Reading from the N-terminus, the 77-residue chain is Acyl carrier protein (77 aa).

Residues 2–77 (SNIEERVKKI…AAIDYVTANQ (76 aa)) form the Carrier domain. An O-(pantetheine 4'-phosphoryl)serine modification is found at serine 37.

Belongs to the acyl carrier protein (ACP) family. In terms of processing, 4'-phosphopantetheine is transferred from CoA to a specific serine of apo-ACP by AcpS. This modification is essential for activity because fatty acids are bound in thioester linkage to the sulfhydryl of the prosthetic group.

It is found in the cytoplasm. Its pathway is lipid metabolism; fatty acid biosynthesis. Functionally, carrier of the growing fatty acid chain in fatty acid biosynthesis. This is Acyl carrier protein from Colwellia psychrerythraea (strain 34H / ATCC BAA-681) (Vibrio psychroerythus).